Reading from the N-terminus, the 215-residue chain is Redox-sensing transcriptional repressor Rex (215 aa).

Positions leucine 18–phenylalanine 57 form a DNA-binding region, H-T-H motif. Glycine 92–glycine 97 serves as a coordination point for NAD(+).

The protein belongs to the transcriptional regulatory Rex family. In terms of assembly, homodimer.

Its subcellular location is the cytoplasm. Modulates transcription in response to changes in cellular NADH/NAD(+) redox state. This is Redox-sensing transcriptional repressor Rex from Listeria innocua serovar 6a (strain ATCC BAA-680 / CLIP 11262).